A 340-amino-acid polypeptide reads, in one-letter code: Guanine nucleotide-binding protein G(I)/G(S)/G(T) subunit beta-3 (340 aa).

WD repeat units follow at residues 53–83, 95–125, 141–170, 182–212, 224–254, 268–298, and 310–340; these read GHLA…IVWD, LRSS…SIYN, AHTG…ALWD, GHTG…KLWD, GHES…RLFD, SIIC…NVWD, and GHDN…KIWN.

It belongs to the WD repeat G protein beta family. As to quaternary structure, g proteins are composed of 3 units, alpha, beta and gamma. Interacts with RASD2.

Its function is as follows. Guanine nucleotide-binding proteins (G proteins) are involved as a modulator or transducer in various transmembrane signaling systems. The beta and gamma chains are required for the GTPase activity, for replacement of GDP by GTP, and for G protein-effector interaction. The polypeptide is Guanine nucleotide-binding protein G(I)/G(S)/G(T) subunit beta-3 (Gnb3) (Mus musculus (Mouse)).